We begin with the raw amino-acid sequence, 211 residues long: Histidine biosynthesis bifunctional protein HisIE (211 aa).

A phosphoribosyl-AMP cyclohydrolase region spans residues 1–122; the sequence is MSFKAAEVSS…DAQEESQMVW (122 aa). Residues 123–211 form a phosphoribosyl-ATP pyrophosphohydrolase region; it reads LHQLEQLLAA…VVNKLKERHK (89 aa).

In the N-terminal section; belongs to the PRA-CH family. This sequence in the C-terminal section; belongs to the PRA-PH family.

Its subcellular location is the cytoplasm. The catalysed reaction is 1-(5-phospho-beta-D-ribosyl)-ATP + H2O = 1-(5-phospho-beta-D-ribosyl)-5'-AMP + diphosphate + H(+). The enzyme catalyses 1-(5-phospho-beta-D-ribosyl)-5'-AMP + H2O = 1-(5-phospho-beta-D-ribosyl)-5-[(5-phospho-beta-D-ribosylamino)methylideneamino]imidazole-4-carboxamide. Its pathway is amino-acid biosynthesis; L-histidine biosynthesis; L-histidine from 5-phospho-alpha-D-ribose 1-diphosphate: step 2/9. The protein operates within amino-acid biosynthesis; L-histidine biosynthesis; L-histidine from 5-phospho-alpha-D-ribose 1-diphosphate: step 3/9. The sequence is that of Histidine biosynthesis bifunctional protein HisIE from Vibrio parahaemolyticus serotype O3:K6 (strain RIMD 2210633).